A 247-amino-acid chain; its full sequence is ATP synthase subunit a, chloroplastic (247 aa).

The next 5 helical transmembrane spans lie at 38 to 58 (QVLI…IIAV), 95 to 115 (VPFI…GALL), 134 to 154 (INTT…AGLS), 199 to 219 (LVVV…VMFL), and 220 to 240 (GLFT…AYIG).

Belongs to the ATPase A chain family. As to quaternary structure, F-type ATPases have 2 components, CF(1) - the catalytic core - and CF(0) - the membrane proton channel. CF(1) has five subunits: alpha(3), beta(3), gamma(1), delta(1), epsilon(1). CF(0) has four main subunits: a, b, b' and c.

The protein resides in the plastid. Its subcellular location is the chloroplast thylakoid membrane. Its function is as follows. Key component of the proton channel; it plays a direct role in the translocation of protons across the membrane. The protein is ATP synthase subunit a, chloroplastic of Oryza sativa subsp. indica (Rice).